The sequence spans 319 residues: CBBY-like protein (319 aa).

The transit peptide at 1–65 directs the protein to the chloroplast; that stretch reads MATVKISLSL…YRSSRSVGVT (65 aa). Aspartate 82 functions as the Nucleophile in the catalytic mechanism. Aspartate 82 and aspartate 84 together coordinate Mg(2+). A substrate-binding site is contributed by aspartate 82. Aspartate 84 serves as the catalytic Proton donor. Substrate-binding positions include glutamate 91, 125 to 129, 158 to 161, and 198 to 204; these read GGKER, HKQK, and STSNEKA. Aspartate 258 lines the Mg(2+) pocket.

Belongs to the HAD-like hydrolase superfamily. DOG/GPP family. The cofactor is Mg(2+).

Its subcellular location is the plastid. It localises to the chloroplast. The enzyme catalyses D-xylulose 1,5-bisphosphate + H2O = D-xylulose 5-phosphate + phosphate. Highly selective xylulose-1,5-bisphosphate (XuBP) phosphatase. Also shows activity towards ribulose-1,5-bisphosphate (RuBP) and fructose-1,6-bisphosphate (FBP), but not towards fructose-6-phosphate (F6P) or ribulose-5-phosphate (Ru5P). Degrades xylulose-1,5-bisphosphate, a potent inhibitor of rubisco produced by the rubisco itself. This chain is CBBY-like protein, found in Arabidopsis thaliana (Mouse-ear cress).